Here is a 588-residue protein sequence, read N- to C-terminus: Proteasome-associated ATPase (588 aa).

A compositionally biased stretch (basic and acidic residues) spans 1 to 10 (MAAHDDDINR). The tract at residues 1-22 (MAAHDDDINRGTRPARGSEDPA) is disordered. A coiled-coil region spans residues 47–94 (RILEERIVELQTNLAGVSAQNERLANTLREARDQIVALKEEVDRLAQP). An ATP-binding site is contributed by 276 to 281 (GCGKTL). Residues 587–588 (YL) form a docks into pockets in the proteasome alpha-ring region.

The protein belongs to the AAA ATPase family. As to quaternary structure, homohexamer. Assembles into a hexameric ring structure that caps the 20S proteasome core. Strongly interacts with the prokaryotic ubiquitin-like protein Pup through a hydrophobic interface; the interacting region of ARC lies in its N-terminal coiled-coil domain. There is one Pup binding site per ARC hexamer ring. Upon ATP-binding, the C-terminus of ARC interacts with the alpha-rings of the proteasome core, possibly by binding to the intersubunit pockets.

Its pathway is protein degradation; proteasomal Pup-dependent pathway. In terms of biological role, ATPase which is responsible for recognizing, binding, unfolding and translocation of pupylated proteins into the bacterial 20S proteasome core particle. May be essential for opening the gate of the 20S proteasome via an interaction with its C-terminus, thereby allowing substrate entry and access to the site of proteolysis. Thus, the C-termini of the proteasomal ATPase may function like a 'key in a lock' to induce gate opening and therefore regulate proteolysis. In Streptomyces griseus subsp. griseus (strain JCM 4626 / CBS 651.72 / NBRC 13350 / KCC S-0626 / ISP 5235), this protein is Proteasome-associated ATPase.